A 431-amino-acid chain; its full sequence is Enolase (431 aa).

Residue Gln162 coordinates (2R)-2-phosphoglycerate. Glu204 functions as the Proton donor in the catalytic mechanism. 3 residues coordinate Mg(2+): Asp241, Glu284, and Asp311. Lys336, Arg365, Ser366, and Lys387 together coordinate (2R)-2-phosphoglycerate. Lys336 (proton acceptor) is an active-site residue.

Belongs to the enolase family. It depends on Mg(2+) as a cofactor.

The protein localises to the cytoplasm. It is found in the secreted. The protein resides in the cell surface. The catalysed reaction is (2R)-2-phosphoglycerate = phosphoenolpyruvate + H2O. Its pathway is carbohydrate degradation; glycolysis; pyruvate from D-glyceraldehyde 3-phosphate: step 4/5. Functionally, catalyzes the reversible conversion of 2-phosphoglycerate (2-PG) into phosphoenolpyruvate (PEP). It is essential for the degradation of carbohydrates via glycolysis. The polypeptide is Enolase (Sorangium cellulosum (strain So ce56) (Polyangium cellulosum (strain So ce56))).